The sequence spans 345 residues: Anthranilate phosphoribosyltransferase (345 aa).

5-phospho-alpha-D-ribose 1-diphosphate is bound by residues glycine 84, 87 to 88, threonine 92, 94 to 97, 112 to 120, and serine 124; these read GD, NIST, and KHGGRGVSS. Position 84 (glycine 84) interacts with anthranilate. Serine 96 provides a ligand contact to Mg(2+). Arginine 170 contacts anthranilate. The Mg(2+) site is built by aspartate 229 and glutamate 230.

The protein belongs to the anthranilate phosphoribosyltransferase family. Homodimer. Mg(2+) serves as cofactor.

It carries out the reaction N-(5-phospho-beta-D-ribosyl)anthranilate + diphosphate = 5-phospho-alpha-D-ribose 1-diphosphate + anthranilate. It functions in the pathway amino-acid biosynthesis; L-tryptophan biosynthesis; L-tryptophan from chorismate: step 2/5. Functionally, catalyzes the transfer of the phosphoribosyl group of 5-phosphorylribose-1-pyrophosphate (PRPP) to anthranilate to yield N-(5'-phosphoribosyl)-anthranilate (PRA). This is Anthranilate phosphoribosyltransferase from Paracidovorax citrulli (strain AAC00-1) (Acidovorax citrulli).